The sequence spans 254 residues: Imidazole glycerol phosphate synthase subunit HisF (254 aa).

Residues Asp-12 and Asp-131 contribute to the active site.

Belongs to the HisA/HisF family. In terms of assembly, heterodimer of HisH and HisF.

Its subcellular location is the cytoplasm. The enzyme catalyses 5-[(5-phospho-1-deoxy-D-ribulos-1-ylimino)methylamino]-1-(5-phospho-beta-D-ribosyl)imidazole-4-carboxamide + L-glutamine = D-erythro-1-(imidazol-4-yl)glycerol 3-phosphate + 5-amino-1-(5-phospho-beta-D-ribosyl)imidazole-4-carboxamide + L-glutamate + H(+). The protein operates within amino-acid biosynthesis; L-histidine biosynthesis; L-histidine from 5-phospho-alpha-D-ribose 1-diphosphate: step 5/9. Its function is as follows. IGPS catalyzes the conversion of PRFAR and glutamine to IGP, AICAR and glutamate. The HisF subunit catalyzes the cyclization activity that produces IGP and AICAR from PRFAR using the ammonia provided by the HisH subunit. The polypeptide is Imidazole glycerol phosphate synthase subunit HisF (Kocuria rhizophila (strain ATCC 9341 / DSM 348 / NBRC 103217 / DC2201)).